The sequence spans 417 residues: Serine hydroxymethyltransferase 1 (417 aa).

(6S)-5,6,7,8-tetrahydrofolate contacts are provided by residues leucine 121 and 125-127 (GHL). Position 229 is an N6-(pyridoxal phosphate)lysine (lysine 229). 354 to 356 (SPF) contributes to the (6S)-5,6,7,8-tetrahydrofolate binding site.

This sequence belongs to the SHMT family. As to quaternary structure, homodimer. Pyridoxal 5'-phosphate serves as cofactor.

It localises to the cytoplasm. It carries out the reaction (6R)-5,10-methylene-5,6,7,8-tetrahydrofolate + glycine + H2O = (6S)-5,6,7,8-tetrahydrofolate + L-serine. Its pathway is one-carbon metabolism; tetrahydrofolate interconversion. It functions in the pathway amino-acid biosynthesis; glycine biosynthesis; glycine from L-serine: step 1/1. In terms of biological role, catalyzes the reversible interconversion of serine and glycine with tetrahydrofolate (THF) serving as the one-carbon carrier. This reaction serves as the major source of one-carbon groups required for the biosynthesis of purines, thymidylate, methionine, and other important biomolecules. Also exhibits THF-independent aldolase activity toward beta-hydroxyamino acids, producing glycine and aldehydes, via a retro-aldol mechanism. This Pseudomonas fluorescens (strain ATCC BAA-477 / NRRL B-23932 / Pf-5) protein is Serine hydroxymethyltransferase 1.